A 565-amino-acid chain; its full sequence is METTTKKARSLYIPYAGPVLLEFPLLNKGSAFSVEERRNFNLSGLLPEVVESIEEQAERAWLQYQGFKTEIDKHIYLRNIQDTNETLFYRLVQNHLEEMMPVIYTPTVGAACERFSEIYRRARGVFISYPNRHNMDDILQNVPNHNIKVIVVTDGERILGLGDQGIGGMGIPIGKLSLYTACGGISPAYTLPVVLDVGTNNQQLLNDPLYMGWRHPRITDDEYYAFVDEFIQAVKQRWPDILLQFEDFAQKNAMPLLTRYRDEICSFNDDIQGTAAVTVGTLIAASRAAGSQLSEQKIVFLGAGSAGCGIAEQIIAQTQREGLSEDAARQNVFMVDRFGLLTDRMPNLLPFQAKLVQKCDNLQHWDTENDVLSLLDVVRNVKPDILIGVSGQTGLFTEEIIREMHKHCPRPIVMPLSNPTSRVEATPQDIIAWTEGNALVATGSPFSPVIWKDKVYPIAQCNNAYIFPGIGLGVIASGASRITDEMLMSASETLAKHSPLVNNGEGLVLPALKDIQVVSRAIAFAVGKMAQQQGVAVKTSAEALQQAIDDNFWKPEYRDYRRTSI.

The active-site Proton donor is Y104. R157 is a binding site for NAD(+). K175 serves as the catalytic Proton acceptor. A divalent metal cation is bound by residues E246, D247, and D270. D270 and N418 together coordinate NAD(+).

It belongs to the malic enzymes family. Homotetramer. It depends on Mg(2+) as a cofactor. Mn(2+) serves as cofactor.

The enzyme catalyses (S)-malate + NAD(+) = pyruvate + CO2 + NADH. The catalysed reaction is oxaloacetate + H(+) = pyruvate + CO2. This is NAD-dependent malic enzyme from Salmonella heidelberg (strain SL476).